We begin with the raw amino-acid sequence, 546 residues long: ATP synthase F(1) complex catalytic subunit beta, mitochondrial (546 aa).

The N-terminal 45 residues, 1-45 (MLGFVGRVAATSASGALRGLGPSPLPQVKVLLRASPAALQSARDY), are a transit peptide targeting the mitochondrion. K123, K132, and K160 each carry N6-acetyllysine; alternate. N6-succinyllysine; alternate occurs at positions 123, 132, and 160. K197 carries the post-translational modification N6-acetyllysine. Residues G208, V209, G210, K211, T212, and V213 each coordinate ADP. G208 serves as a coordination point for ATP. G208, V209, G210, K211, and T212 together coordinate phosphate. Residues G210, K211, T212, and V213 each coordinate ATP. T212 is a binding site for Mg(2+). A Mg(2+)-binding site is contributed by E237. R238 is a binding site for ATP. N6-acetyllysine; alternate occurs at positions 258 and 263. N6-succinyllysine; alternate occurs at positions 258 and 263. Phosphothreonine is present on T311. Residue K425 is modified to N6-acetyllysine. S432 is subject to Phosphoserine. Residues K479 and K484 each carry the N6-acetyllysine modification. K521 carries the post-translational modification N6-acetyllysine; alternate. Residue K521 is modified to N6-succinyllysine; alternate. Residues 521–546 (KLAEEHSATQTSPSPKGAAAXXXRVV) form a disordered region.

This sequence belongs to the ATPase alpha/beta chains family. In terms of assembly, homotrimer. Component of the ATP synthase complex composed at least of ATP5F1A/subunit alpha, ATP5F1B/subunit beta, ATP5MC1/subunit c (homooctomer), MT-ATP6/subunit a, MT-ATP8/subunit 8, ATP5ME/subunit e, ATP5MF/subunit f, ATP5MG/subunit g, ATP5MK/subunit k, ATP5MJ/subunit j, ATP5F1C/subunit gamma, ATP5F1D/subunit delta, ATP5F1E/subunit epsilon, ATP5PF/subunit F6, ATP5PB/subunit b, ATP5PD/subunit d, ATP5PO/subunit OSCP. ATP synthase complex consists of a soluble F(1) head domain (subunits alpha(3) and beta(3)) - the catalytic core - and a membrane F(0) domain - the membrane proton channel (subunits c, a, 8, e, f, g, k and j). These two domains are linked by a central stalk (subunits gamma, delta, and epsilon) rotating inside the F1 region and a stationary peripheral stalk (subunits F6, b, d, and OSCP). Interacts with PPIF. Interacts with BCL2L1 isoform BCL-X(L); the interaction mediates the association of BCL2L1 isoform BCL-X(L) with the mitochondrial membrane F(1)F(0) ATP synthase and enhances neurons metabolic efficiency. Interacts with CLN5 and PPT1. Interacts with S100A1; this interaction increases F1-ATPase activity. Interacts with MTLN. Interacts with TTC5/STRAP; the interaction results in decreased mitochondrial ATP production.

Its subcellular location is the mitochondrion inner membrane. The catalysed reaction is ATP + H2O + 4 H(+)(in) = ADP + phosphate + 5 H(+)(out). In terms of biological role, catalytic subunit beta, of the mitochondrial membrane ATP synthase complex (F(1)F(0) ATP synthase or Complex V) that produces ATP from ADP in the presence of a proton gradient across the membrane which is generated by electron transport complexes of the respiratory chain. ATP synthase complex consist of a soluble F(1) head domain - the catalytic core - and a membrane F(1) domain - the membrane proton channel. These two domains are linked by a central stalk rotating inside the F(1) region and a stationary peripheral stalk. During catalysis, ATP synthesis in the catalytic domain of F(1) is coupled via a rotary mechanism of the central stalk subunits to proton translocation. In vivo, can only synthesize ATP although its ATP hydrolase activity can be activated artificially in vitro. With the subunit alpha (ATP5F1A), forms the catalytic core in the F(1) domain. The protein is ATP synthase F(1) complex catalytic subunit beta, mitochondrial of Canis lupus familiaris (Dog).